The sequence spans 476 residues: Protein transport protein SEC61 subunit alpha (476 aa).

Over 1 to 33 (MSSLRFLDLVKPFVPFLPEVQQPETKIPFNQKL) the chain is Cytoplasmic. A helical membrane pass occupies residues 34–54 (MWTGLTLLIFLVMSQMPLYGI). Residues 55 to 76 (VSSDTSDPLYWLRMMMASNRGT) lie on the Lumenal side of the membrane. A helical membrane pass occupies residues 77 to 97 (LMELGITPIISSGMVFQLLAG). Residues 98 to 119 (THMIDVNLDLKADRELYQTAQK) lie on the Cytoplasmic side of the membrane. The helical transmembrane segment at 120–140 (LFAVILSIGTATVYVFTGLYG) threads the bilayer. The Lumenal portion of the chain corresponds to 141-146 (PPSDLG). Residues 147 to 167 (AGIVFLLILQLVVAGMIVILL) traverse the membrane as a helical segment. At 168 to 246 (DELLQKGYGL…YRQNLPNIMN (79 aa)) the chain is on the cytoplasmic side. Residues 247–267 (LLATLVVFAAVIYLQGFRVEI) traverse the membrane as a helical segment. At 268 to 361 (PVKSSRQRGA…KDALLDPIHT (94 aa)) the chain is on the lumenal side. Residues 362–382 (AVYIAYMLTACAVFSKTWIEV) traverse the membrane as a helical segment. The Cytoplasmic segment spans residues 383–415 (SGSSPRDVAKQLKDQGLVMAGHREQSMYKELKR). Residues 416 to 434 (IIPTAAAFGGACIGALSVA) form a helical membrane-spanning segment. Residues 435-440 (SDLMGA) are Lumenal-facing. A helical transmembrane segment spans residues 441–458 (LGSGTGTLLAVTIIYGYF). Topologically, residues 459 to 476 (EIAAKEGDLQGMKGMIMG) are cytoplasmic.

This sequence belongs to the SecY/SEC61-alpha family. As to quaternary structure, heterotrimeric complex composed of SEC61-alpha, SEC61-beta and SEC61-gamma.

Its subcellular location is the endoplasmic reticulum membrane. Its function is as follows. Appears to play a crucial role in the insertion of secretory and membrane polypeptides into the ER. It is required for assembly of membrane and secretory proteins and is essential for cell growth. It interacts with other membrane proteins required for protein translocation. Upon binding to SEC62/63 complex, secretory precursor polypeptides may engage SEC61 to begin membrane penetration event. A cycle of assembly and disassembly of SEC62/63 from SEC61 may govern the activity of the translocase. This chain is Protein transport protein SEC61 subunit alpha (sec-61), found in Neurospora crassa (strain ATCC 24698 / 74-OR23-1A / CBS 708.71 / DSM 1257 / FGSC 987).